Reading from the N-terminus, the 398-residue chain is Enoyl-[acyl-carrier-protein] reductase [NADH] (398 aa).

NAD(+)-binding positions include G48–Y53, F74–E75, D111–A112, and L139–A140. Y225 is a binding site for substrate. The Proton donor role is filled by Y235. NAD(+)-binding positions include K244 and V273 to T275.

The protein belongs to the TER reductase family. Monomer.

The enzyme catalyses a 2,3-saturated acyl-[ACP] + NAD(+) = a (2E)-enoyl-[ACP] + NADH + H(+). Its pathway is lipid metabolism; fatty acid biosynthesis. Involved in the final reduction of the elongation cycle of fatty acid synthesis (FAS II). Catalyzes the reduction of a carbon-carbon double bond in an enoyl moiety that is covalently linked to an acyl carrier protein (ACP). In Pseudomonas fluorescens (strain ATCC BAA-477 / NRRL B-23932 / Pf-5), this protein is Enoyl-[acyl-carrier-protein] reductase [NADH].